The primary structure comprises 473 residues: Kremen protein 1 (473 aa).

A signal peptide spans 1 to 19 (MAPPAARLALLSAAALTLA). Topologically, residues 21 to 392 (RPAPGPRSGP…ANSHRVEGWT (372 aa)) are extracellular. A Kringle domain is found at 31–114 (ECFTANGADY…YWKYCEIPAC (84 aa)). 8 disulfides stabilise this stretch: C32–C114, C55–C95, C84–C109, C122–C186, C147–C167, C151–C169, C190–C198, and C214–C240. N59 carries an N-linked (GlcNAc...) asparagine glycan. One can recognise a WSC domain in the interval 116 to 210 (MPGNLGCYKD…DGRIILFDTL (95 aa)). Residues 214–321 (CGGNYSAMAA…QGFAVLYQAT (108 aa)) form the CUB domain. Residues N217, N255, N293, N333, and N345 are each glycosylated (N-linked (GlcNAc...) asparagine). Residues 393 to 413 (VYGLATLLILTVTAVVAKILL) traverse the membrane as a helical segment. At 414 to 473 (HVTFKSHRVPASGDLRDCRQPGASGDIWTIFYEPSTTISIFKKKLKGQSQQDDRNPLVSD) the chain is on the cytoplasmic side. Residues 414 to 473 (HVTFKSHRVPASGDLRDCRQPGASGDIWTIFYEPSTTISIFKKKLKGQSQQDDRNPLVSD) are essential for apoptotic activity.

As to quaternary structure, forms a ternary complex with DKK1 and LRP6. Interacts with LRP6 in a DKK1-dependent manner. Interacts with DKK1 and RSPO1 (via FU repeats). As to expression, in the adult, widely expressed with high levels in heart, lung, kidney, skeletal muscle and testis.

The protein resides in the cell membrane. Its function is as follows. Receptor for Dickkopf proteins. Cooperates with DKK1/2 to inhibit Wnt/beta-catenin signaling by promoting the endocytosis of Wnt receptors LRP5 and LRP6. In the absence of DKK1, potentiates Wnt-beta-catenin signaling by maintaining LRP5 or LRP6 at the cell membrane. Can trigger apoptosis in a Wnt-independent manner and this apoptotic activity is inhibited upon binding of the ligand DKK1. Plays a role in limb development; attenuates Wnt signaling in the developing limb to allow normal limb patterning and can also negatively regulate bone formation. Modulates cell fate decisions in the developing cochlea with an inhibitory role in hair cell fate specification. The protein is Kremen protein 1 (Kremen1) of Mus musculus (Mouse).